Reading from the N-terminus, the 424-residue chain is Choline-phosphate cytidylyltransferase (424 aa).

Positions 1–70 (MANPTTGKSS…RKRRRLTKEF (70 aa)) are disordered. Over residues 14-24 (KLSNSSLSNLF) the composition is skewed to low complexity. Ser-16 carries the post-translational modification Phosphoserine. Positions 35 to 44 (ETEEQDNEDK) are enriched in acidic residues. Positions 45-55 (DESKNQDENKD) are enriched in basic and acidic residues. Residue Thr-59 is modified to Phosphothreonine. CTP-binding positions include 111–119 (VFDLFHLGH) and Lys-149. Substrate-binding residues include Lys-149 and Trp-178. CTP is bound by residues 195–196 (HD), Tyr-200, and 223–227 (RTNGV). Ser-346 carries the post-translational modification Phosphoserine. The segment at 348–424 (ATEFANEFTG…LTQKKKQSAN (77 aa)) is disordered. The segment covering 381-398 (NSNNTNTNSDSDSNTNST) has biased composition (low complexity). Ser-401 is subject to Phosphoserine; by CK2.

It belongs to the cytidylyltransferase family.

The protein resides in the membrane. The catalysed reaction is phosphocholine + CTP + H(+) = CDP-choline + diphosphate. It functions in the pathway phospholipid metabolism; phosphatidylcholine biosynthesis; phosphatidylcholine from phosphocholine: step 1/2. In terms of biological role, catalyzes the key rate-limiting step in the CDP-choline pathway for phosphatidylcholine biosynthesis. The protein is Choline-phosphate cytidylyltransferase (PCT1) of Saccharomyces cerevisiae (strain ATCC 204508 / S288c) (Baker's yeast).